The primary structure comprises 765 residues: 1,4-alpha-glucan branching enzyme GlgB (765 aa).

The active-site Nucleophile is D431. E484 (proton donor) is an active-site residue.

This sequence belongs to the glycosyl hydrolase 13 family. GlgB subfamily. In terms of assembly, monomer.

The enzyme catalyses Transfers a segment of a (1-&gt;4)-alpha-D-glucan chain to a primary hydroxy group in a similar glucan chain.. It participates in glycan biosynthesis; glycogen biosynthesis. Functionally, catalyzes the formation of the alpha-1,6-glucosidic linkages in glycogen by scission of a 1,4-alpha-linked oligosaccharide from growing alpha-1,4-glucan chains and the subsequent attachment of the oligosaccharide to the alpha-1,6 position. The chain is 1,4-alpha-glucan branching enzyme GlgB from Synechococcus sp. (strain CC9311).